Reading from the N-terminus, the 370-residue chain is High affinity iron permease ftrA (370 aa).

Transmembrane regions (helical) follow at residues 5–25 (VFAV…SIIV), 52–72 (VWWG…GMIG), 88–108 (LWEG…GAAL), 148–168 (AMFL…VVFI), 179–199 (AFPL…YLLY), 206–226 (SLQI…AGLF), and 293–313 (YGSV…FVAM). The disordered stretch occupies residues 335–370 (RKSAEPGNGEQDVEVSTIPSDLQTESKIPKSGASLV). Polar residues predominate over residues 351-360 (TIPSDLQTES).

It belongs to the oxidase-dependent Fe transporter (OFeT) (TC 9.A.10.1) family.

It localises to the cell membrane. Functionally, high affinity iron permease; part of the reductive iron assimilatory system (RIA), a siderophore-independent high affinity iron uptake mechanism. In Aspergillus fumigatus (strain ATCC MYA-4609 / CBS 101355 / FGSC A1100 / Af293) (Neosartorya fumigata), this protein is High affinity iron permease ftrA.